Here is a 446-residue protein sequence, read N- to C-terminus: FAD-dependent monooxygenase eupB (446 aa).

A helical transmembrane segment spans residues 10–30; it reads EPHIAIVGGGIVGVILTLGLL. A glycan (N-linked (GlcNAc...) asparagine) is linked at Asn-33. 3 residues coordinate FAD: Glu-40, Ala-53, and Arg-125. Catalysis depends on residues Arg-206 and Tyr-239. Asn-243 is a glycosylation site (N-linked (GlcNAc...) asparagine). Asp-322 and Ala-335 together coordinate FAD. A glycan (N-linked (GlcNAc...) asparagine) is linked at Asn-395.

It belongs to the paxM FAD-dependent monooxygenase family. Requires FAD as cofactor.

It localises to the membrane. The protein operates within secondary metabolite biosynthesis; terpenoid biosynthesis. Functionally, FAD-dependent monooxygenase; part of the gene cluster that mediates the biosynthesis of eupenifeldin, a bistropolone meroterpenoid that acts as an antitumor agent. The first step of eupenifeldin biosynthesis is the biosynthesis of 3-methylorcinaldehyde performed by the non-reducing polyketide synthase eupA. Oxidative dearomatization of 3-methylorcinaldehyde likely catalyzed by the FAD-dependent monooxygenase eupB is followed by oxidative ring expansion by the 2-oxoglutarate-dependent dioxygenase eupC to provide the first tropolone metabolite, tropolone stipitaldehyde. In parallel, generation of sesquiterpene alpha-humulene from farnesylpyrophosphate (FPP) is catalyzed by the terpene cyclase eupE. The cytochrome P450 monooxygenase eupD then hydroxylates humulene to humulenol. The putative Diels-Alderase eupF probably catalyzes the formation of the tropolone-humulene skeleton by linking humulenol and the polyketide moiety. The short-chain dehydrogenase/reductase eupG and the flavin-dependent monooxygenase eupH are also essential for eupenifeldin biosynthesis and are likely the additional decorating enzymes of the tropolone-humulene skeleton to produce final eupenifeldin or derivatives. In Phoma sp, this protein is FAD-dependent monooxygenase eupB.